Consider the following 42-residue polypeptide: Photosystem I reaction center subunit IX (42 aa).

Residues 7–27 (FLSLGPVLLVLWLSVQATLLI) form a helical membrane-spanning segment.

This sequence belongs to the PsaJ family.

It is found in the cellular thylakoid membrane. Its function is as follows. May help in the organization of the PsaE and PsaF subunits. This chain is Photosystem I reaction center subunit IX, found in Gloeothece citriformis (strain PCC 7424) (Cyanothece sp. (strain PCC 7424)).